The sequence spans 371 residues: UDP-N-acetylglucosamine--N-acetylmuramyl-(pentapeptide) pyrophosphoryl-undecaprenol N-acetylglucosamine transferase (371 aa).

Residues 15 to 17 (TGG), Asn-126, Arg-172, Ser-199, Ile-256, 275 to 280 (ALTVSE), and Gln-301 contribute to the UDP-N-acetyl-alpha-D-glucosamine site.

The protein belongs to the glycosyltransferase 28 family. MurG subfamily.

The protein localises to the cell inner membrane. It catalyses the reaction di-trans,octa-cis-undecaprenyl diphospho-N-acetyl-alpha-D-muramoyl-L-alanyl-D-glutamyl-meso-2,6-diaminopimeloyl-D-alanyl-D-alanine + UDP-N-acetyl-alpha-D-glucosamine = di-trans,octa-cis-undecaprenyl diphospho-[N-acetyl-alpha-D-glucosaminyl-(1-&gt;4)]-N-acetyl-alpha-D-muramoyl-L-alanyl-D-glutamyl-meso-2,6-diaminopimeloyl-D-alanyl-D-alanine + UDP + H(+). It functions in the pathway cell wall biogenesis; peptidoglycan biosynthesis. In terms of biological role, cell wall formation. Catalyzes the transfer of a GlcNAc subunit on undecaprenyl-pyrophosphoryl-MurNAc-pentapeptide (lipid intermediate I) to form undecaprenyl-pyrophosphoryl-MurNAc-(pentapeptide)GlcNAc (lipid intermediate II). The polypeptide is UDP-N-acetylglucosamine--N-acetylmuramyl-(pentapeptide) pyrophosphoryl-undecaprenol N-acetylglucosamine transferase (Francisella tularensis subsp. tularensis (strain WY96-3418)).